We begin with the raw amino-acid sequence, 244 residues long: Phosphatidylinositol phosphate synthase (244 aa).

The next 3 membrane-spanning stretches (helical) occupy residues 24–42, 49–66, and 72–91; these read YARA…FLIR, TVTL…LVFY, and FWGT…DGNM. 48–51 serves as a coordination point for a CDP-1,2-diacyl-sn-glycerol; sequence DTVT. Mg(2+) contacts are provided by D85 and D88. Positions 89, 93, and 99 each coordinate a CDP-1,2-diacyl-sn-glycerol. Mg(2+)-binding residues include D106 and D110. The active-site Proton acceptor is D110. 3 consecutive transmembrane segments (helical) span residues 117–137, 174–190, and 196–214; these read IFGG…LCAV, LVIS…HKFG, and VLLP…VTLI.

The protein belongs to the CDP-alcohol phosphatidyltransferase class-I family. In terms of assembly, homodimer. It depends on Mg(2+) as a cofactor.

The protein localises to the cell membrane. The enzyme catalyses a CDP-1,2-diacyl-sn-glycerol + 1D-myo-inositol 3-phosphate = a 1,2-diacyl-sn-glycero-3-phospho-(1D-myo-inositol-3-phosphate) + CMP + H(+). The catalysed reaction is 1,2-di-(9Z-octadecenoyl)-sn-glycero-3-cytidine-5'-diphosphate + 1D-myo-inositol 3-phosphate = 1,2-di-(9Z-octadecenoyl)-sn-glycero-3-phospho-(1D-myo-inositol-3-phosphate) + CMP + H(+). It participates in phospholipid metabolism; phosphatidylinositol phosphate biosynthesis. Its function is as follows. Catalyzes the conjugation of the 1'-hydroxyl group of D-myo-inositol-3-phosphate (also named L-myo-inositol-1-phosphate) with a lipid tail of cytidine diphosphate diacylglycerol (CDP-DAG), forming phosphatidylinositol phosphate (PIP) and CMP. PIP is a precursor of phosphatidylinositol (PI) which is an essential lipid required for cell wall formation. This Streptomyces avermitilis (strain ATCC 31267 / DSM 46492 / JCM 5070 / NBRC 14893 / NCIMB 12804 / NRRL 8165 / MA-4680) protein is Phosphatidylinositol phosphate synthase.